The sequence spans 87 residues: Large ribosomal subunit protein eL33 (87 aa).

It belongs to the eukaryotic ribosomal protein eL33 family.

This is Large ribosomal subunit protein eL33 from Pyrococcus abyssi (strain GE5 / Orsay).